Consider the following 190-residue polypeptide: Elongation factor P 1 (190 aa).

Belongs to the elongation factor P family.

The protein resides in the cytoplasm. Its pathway is protein biosynthesis; polypeptide chain elongation. Its function is as follows. Involved in peptide bond synthesis. Stimulates efficient translation and peptide-bond synthesis on native or reconstituted 70S ribosomes in vitro. Probably functions indirectly by altering the affinity of the ribosome for aminoacyl-tRNA, thus increasing their reactivity as acceptors for peptidyl transferase. The protein is Elongation factor P 1 (efp1) of Lactobacillus johnsonii (strain CNCM I-12250 / La1 / NCC 533).